A 264-amino-acid chain; its full sequence is Thymidylate synthase 2 (264 aa).

Arg-21 lines the dUMP pocket. Position 51 (His-51) interacts with (6R)-5,10-methylene-5,6,7,8-tetrahydrofolate. A dUMP-binding site is contributed by 126–127 (RR). The active-site Nucleophile is the Cys-146. DUMP is bound by residues 166 to 169 (RSAD), Asn-177, and 207 to 209 (HIY). Asp-169 is a (6R)-5,10-methylene-5,6,7,8-tetrahydrofolate binding site. Residue Ser-263 participates in (6R)-5,10-methylene-5,6,7,8-tetrahydrofolate binding.

This sequence belongs to the thymidylate synthase family. Bacterial-type ThyA subfamily. Homodimer.

The protein localises to the cytoplasm. It catalyses the reaction dUMP + (6R)-5,10-methylene-5,6,7,8-tetrahydrofolate = 7,8-dihydrofolate + dTMP. Its pathway is pyrimidine metabolism; dTTP biosynthesis. Functionally, catalyzes the reductive methylation of 2'-deoxyuridine-5'-monophosphate (dUMP) to 2'-deoxythymidine-5'-monophosphate (dTMP) while utilizing 5,10-methylenetetrahydrofolate (mTHF) as the methyl donor and reductant in the reaction, yielding dihydrofolate (DHF) as a by-product. This enzymatic reaction provides an intracellular de novo source of dTMP, an essential precursor for DNA biosynthesis. In Bacillus spizizenii (strain ATCC 23059 / NRRL B-14472 / W23) (Bacillus subtilis subsp. spizizenii), this protein is Thymidylate synthase 2.